The sequence spans 236 residues: Three prime repair exonuclease 2 (236 aa).

Residues Asp-14 and Glu-16 each coordinate Mg(2+). Residues 16-17 (EA) and Tyr-122 contribute to the substrate site. Catalysis depends on His-188, which acts as the Proton donor/acceptor. Asp-193 is a Mg(2+) binding site. Asp-193 lines the substrate pocket.

It belongs to the exonuclease superfamily. TREX family. As to quaternary structure, homodimer. Requires Mg(2+) as cofactor. Detected in heart, breast, prostate, skeletal muscle, testis, uterus, bone marrow, colon, small intestine, stomach and thymus.

The protein resides in the nucleus. The enzyme catalyses Exonucleolytic cleavage in the 3'- to 5'-direction to yield nucleoside 5'-phosphates.. Its function is as follows. Exonuclease with a preference for double-stranded DNA with mismatched 3' termini. May play a role in DNA repair. This is Three prime repair exonuclease 2 (TREX2) from Homo sapiens (Human).